Here is a 121-residue protein sequence, read N- to C-terminus: Small ribosomal subunit protein uS13 (121 aa).

Residues 97–121 (VRGQRTRTNARTRRGARKTVAGKKK) are disordered. Basic residues predominate over residues 100 to 121 (QRTRTNARTRRGARKTVAGKKK).

It belongs to the universal ribosomal protein uS13 family. As to quaternary structure, part of the 30S ribosomal subunit. Forms a loose heterodimer with protein S19. Forms two bridges to the 50S subunit in the 70S ribosome.

Functionally, located at the top of the head of the 30S subunit, it contacts several helices of the 16S rRNA. In the 70S ribosome it contacts the 23S rRNA (bridge B1a) and protein L5 of the 50S subunit (bridge B1b), connecting the 2 subunits; these bridges are implicated in subunit movement. Contacts the tRNAs in the A and P-sites. The polypeptide is Small ribosomal subunit protein uS13 (Prochlorococcus marinus (strain MIT 9313)).